The sequence spans 384 residues: Chaperone protein DnaJ (384 aa).

Residues 4 to 68 (DFYEILGVSR…EKRQMYDQMG (65 aa)) enclose the J domain. Disordered regions lie at residues 29–60 (REYHPDVSDDPDAEEKFKQAKKAKEVLTDEEK) and 73–131 (EQAE…GQDL). A compositionally biased stretch (basic and acidic residues) spans 42 to 60 (EEKFKQAKKAKEVLTDEEK). Gly residues predominate over residues 80–101 (GAGGGGGRGGMGGDPFGGGAGG). Over residues 102-111 (FDMQDIFDQF) the composition is skewed to low complexity. Over residues 112 to 121 (FGGGGRGGRG) the composition is skewed to gly residues. Residues 145 to 227 (GATKQLNVTR…CRGNGVVQND (83 aa)) form a CR-type zinc finger. Zn(2+) is bound by residues cysteine 158, cysteine 161, cysteine 175, and cysteine 178. CXXCXGXG motif repeat units lie at residues 158-165 (CDDCDGAG), 175-182 (CPECNGQG), 201-208 (CRRCDGEG), and 215-222 (CSTCRGNG). The disordered stretch occupies residues 160–191 (DCDGAGHPPGADSETCPECNGQGQTTQVQQTP). A compositionally biased stretch (low complexity) spans 180–190 (GQGQTTQVQQT). Zn(2+)-binding residues include cysteine 201, cysteine 204, cysteine 215, and cysteine 218.

It belongs to the DnaJ family. In terms of assembly, homodimer. Zn(2+) serves as cofactor.

It is found in the cytoplasm. In terms of biological role, participates actively in the response to hyperosmotic and heat shock by preventing the aggregation of stress-denatured proteins and by disaggregating proteins, also in an autonomous, DnaK-independent fashion. Unfolded proteins bind initially to DnaJ; upon interaction with the DnaJ-bound protein, DnaK hydrolyzes its bound ATP, resulting in the formation of a stable complex. GrpE releases ADP from DnaK; ATP binding to DnaK triggers the release of the substrate protein, thus completing the reaction cycle. Several rounds of ATP-dependent interactions between DnaJ, DnaK and GrpE are required for fully efficient folding. Also involved, together with DnaK and GrpE, in the DNA replication of plasmids through activation of initiation proteins. In Haloarcula marismortui (strain ATCC 43049 / DSM 3752 / JCM 8966 / VKM B-1809) (Halobacterium marismortui), this protein is Chaperone protein DnaJ.